Reading from the N-terminus, the 129-residue chain is D-ribose pyranase (129 aa).

Catalysis depends on histidine 20, which acts as the Proton donor. Substrate contacts are provided by residues aspartate 28, histidine 96, and 118–120 (YAN).

This sequence belongs to the RbsD / FucU family. RbsD subfamily. As to quaternary structure, homodecamer.

The protein resides in the cytoplasm. It catalyses the reaction beta-D-ribopyranose = beta-D-ribofuranose. The protein operates within carbohydrate metabolism; D-ribose degradation; D-ribose 5-phosphate from beta-D-ribopyranose: step 1/2. In terms of biological role, catalyzes the interconversion of beta-pyran and beta-furan forms of D-ribose. The chain is D-ribose pyranase from Streptomyces avermitilis (strain ATCC 31267 / DSM 46492 / JCM 5070 / NBRC 14893 / NCIMB 12804 / NRRL 8165 / MA-4680).